An 85-amino-acid polypeptide reads, in one-letter code: Putative defensin-like protein 79 (85 aa).

The signal sequence occupies residues 1-31 (MKSEKSADAYGTYFLLISTIFLLFIARQASS). Cystine bridges form between Cys-37–Cys-69, Cys-44–Cys-60, Cys-47–Cys-67, and Cys-51–Cys-68.

Belongs to the DEFL family.

It localises to the secreted. This Arabidopsis thaliana (Mouse-ear cress) protein is Putative defensin-like protein 79.